The primary structure comprises 610 residues: UvrABC system protein C (610 aa).

A GIY-YIG domain is found at 16–94; that stretch reads SQPGVYRMYD…IKLYQPRYNV (79 aa). Positions 204–239 constitute a UVR domain; that stretch reads DQVLTQLIARMEKASQDLAFEEAARIRDQIQAVRRV.

It belongs to the UvrC family. As to quaternary structure, interacts with UvrB in an incision complex.

It localises to the cytoplasm. The UvrABC repair system catalyzes the recognition and processing of DNA lesions. UvrC both incises the 5' and 3' sides of the lesion. The N-terminal half is responsible for the 3' incision and the C-terminal half is responsible for the 5' incision. The protein is UvrABC system protein C of Salmonella heidelberg (strain SL476).